A 221-amino-acid polypeptide reads, in one-letter code: UPF0758 protein CGSHiEE_07200 (221 aa).

Positions 99–221 constitute an MPN domain; the sequence is IINDPETVKL…CYSFAENCLL (123 aa). 3 residues coordinate Zn(2+): His170, His172, and Asp183. A JAMM motif motif is present at residues 170–183; the sequence is HNHPSGVTEPSYSD.

It belongs to the UPF0758 family.

In Haemophilus influenzae (strain PittEE), this protein is UPF0758 protein CGSHiEE_07200.